Consider the following 273-residue polypeptide: 3-methyl-2-oxobutanoate hydroxymethyltransferase 2 (273 aa).

Residues Asp50 and Asp89 each coordinate Mg(2+). 3-methyl-2-oxobutanoate-binding positions include Asp50–Ser51, Asp89, and Lys119. A Mg(2+)-binding site is contributed by Glu121. The active-site Proton acceptor is Glu188.

It belongs to the PanB family. Homodecamer; pentamer of dimers. Mg(2+) serves as cofactor.

The protein localises to the cytoplasm. It catalyses the reaction 3-methyl-2-oxobutanoate + (6R)-5,10-methylene-5,6,7,8-tetrahydrofolate + H2O = 2-dehydropantoate + (6S)-5,6,7,8-tetrahydrofolate. The protein operates within cofactor biosynthesis; (R)-pantothenate biosynthesis; (R)-pantoate from 3-methyl-2-oxobutanoate: step 1/2. In terms of biological role, catalyzes the reversible reaction in which hydroxymethyl group from 5,10-methylenetetrahydrofolate is transferred onto alpha-ketoisovalerate to form ketopantoate. The chain is 3-methyl-2-oxobutanoate hydroxymethyltransferase 2 from Zymomonas mobilis subsp. mobilis (strain ATCC 31821 / ZM4 / CP4).